The sequence spans 217 residues: Carbon disulfide hydrolase (217 aa).

Zn(2+)-binding residues include C39, H98, and C101. The segment at 192–217 is disordered; sequence DKEKRARTDCTPTPYGVKGNQPPRWK.

Belongs to the beta-class carbonic anhydrase family. As to quaternary structure, forms only homooctamers in solution. Zn(2+) serves as cofactor.

It catalyses the reaction carbon disulfide + 2 H2O = 2 hydrogen sulfide + CO2 + 2 H(+). The protein operates within sulfur metabolism; hydrogen sulfide biosynthesis. In terms of biological role, catalyzes the conversion of carbon disulfide into hydrogen sulfide and carbon dioxide, with carbonyl sulfide as an intermediate. Likely plays a key role in sulfur metabolism that allows A.thiooxidans S1p to grow on carbon disulfide as the main carbon and energy source. Does not show carbonic anhydrase activity (hydration of CO(2) to carbonate). The sequence is that of Carbon disulfide hydrolase from Acidithiobacillus thiooxidans (Thiobacillus thiooxidans).